The sequence spans 54 residues: Ovomucoid (54 aa).

One can recognise a Kazal-like domain in the interval 4 to 54 (VDCSDYPKPSCTLEDKPLCGSDNQTYSNKCSFCNAVVDSNGTLTLSHFGKC). 3 cysteine pairs are disulfide-bonded: Cys6–Cys36, Cys14–Cys33, and Cys22–Cys54. Asn43 carries an N-linked (GlcNAc...) asparagine glycan.

It localises to the secreted. This chain is Ovomucoid, found in Megapodius freycinet (Dusky scrubfowl).